The following is a 339-amino-acid chain: Heat-inducible transcription repressor HrcA (339 aa).

Belongs to the HrcA family.

Its function is as follows. Negative regulator of class I heat shock genes (grpE-dnaK-dnaJ and groELS operons). Prevents heat-shock induction of these operons. In Methylobacillus flagellatus (strain ATCC 51484 / DSM 6875 / VKM B-1610 / KT), this protein is Heat-inducible transcription repressor HrcA.